Reading from the N-terminus, the 439-residue chain is Enolase (439 aa).

Gln163 provides a ligand contact to (2R)-2-phosphoglycerate. The active-site Proton donor is the Glu205. 3 residues coordinate Mg(2+): Asp242, Glu287, and Asp314. Positions 339, 368, 369, and 390 each coordinate (2R)-2-phosphoglycerate. The active-site Proton acceptor is Lys339.

This sequence belongs to the enolase family. Mg(2+) is required as a cofactor.

The protein resides in the cytoplasm. The protein localises to the secreted. Its subcellular location is the cell surface. It carries out the reaction (2R)-2-phosphoglycerate = phosphoenolpyruvate + H2O. It participates in carbohydrate degradation; glycolysis; pyruvate from D-glyceraldehyde 3-phosphate: step 4/5. Catalyzes the reversible conversion of 2-phosphoglycerate (2-PG) into phosphoenolpyruvate (PEP). It is essential for the degradation of carbohydrates via glycolysis. The polypeptide is Enolase (Levilactobacillus brevis (strain ATCC 367 / BCRC 12310 / CIP 105137 / JCM 1170 / LMG 11437 / NCIMB 947 / NCTC 947) (Lactobacillus brevis)).